Consider the following 192-residue polypeptide: dTTP/UTP pyrophosphatase (192 aa).

Residue Asp-71 is the Proton acceptor of the active site.

It belongs to the Maf family. YhdE subfamily. It depends on a divalent metal cation as a cofactor.

It is found in the cytoplasm. It carries out the reaction dTTP + H2O = dTMP + diphosphate + H(+). The enzyme catalyses UTP + H2O = UMP + diphosphate + H(+). In terms of biological role, nucleoside triphosphate pyrophosphatase that hydrolyzes dTTP and UTP. May have a dual role in cell division arrest and in preventing the incorporation of modified nucleotides into cellular nucleic acids. In Clostridium kluyveri (strain NBRC 12016), this protein is dTTP/UTP pyrophosphatase.